The primary structure comprises 542 residues: Chaperonin GroEL 4 (542 aa).

Residues 30-33, Lys-51, 87-91, Gly-415, and Asp-496 each bind ATP; these read TLGP and DGTTT.

Belongs to the chaperonin (HSP60) family. In terms of assembly, forms a cylinder of 14 subunits composed of two heptameric rings stacked back-to-back. Interacts with the co-chaperonin GroES.

Its subcellular location is the cytoplasm. The catalysed reaction is ATP + H2O + a folded polypeptide = ADP + phosphate + an unfolded polypeptide.. In terms of biological role, together with its co-chaperonin GroES, plays an essential role in assisting protein folding. The GroEL-GroES system forms a nano-cage that allows encapsulation of the non-native substrate proteins and provides a physical environment optimized to promote and accelerate protein folding. This chain is Chaperonin GroEL 4, found in Rhizobium etli (strain ATCC 51251 / DSM 11541 / JCM 21823 / NBRC 15573 / CFN 42).